We begin with the raw amino-acid sequence, 95 residues long: Small ribosomal subunit protein bS6 (95 aa).

Belongs to the bacterial ribosomal protein bS6 family.

Its function is as follows. Binds together with bS18 to 16S ribosomal RNA. The polypeptide is Small ribosomal subunit protein bS6 (Clostridium beijerinckii (strain ATCC 51743 / NCIMB 8052) (Clostridium acetobutylicum)).